Reading from the N-terminus, the 505-residue chain is Flagellin (505 aa).

This sequence belongs to the bacterial flagellin family.

The protein localises to the secreted. It localises to the bacterial flagellum. Its function is as follows. Flagellin is the subunit protein which polymerizes to form the filaments of bacterial flagella. This chain is Flagellin (fliC), found in Salmonella dublin.